Consider the following 873-residue polypeptide: MDRAALRAAAMGEKKEGGGGGAAADGGAGAAVSRALQQCGQLQKLIDISIGSLRGLRTKCSVSNDLTQQEIRTLEAKLVKYICKQQQSKLSVTPSDRTAELNSYPRFSDWLYIFNVRPEVVQEIPQELTLDALLEMDEAKAKEMLRRWGASTEECSRLQQALTCLRKVTGLGGEHKMDSGWSSTDARDSSLGPPMDMLSSLGRAGASTQGPRSISVSALPASDSPVPGLSEGLSDSCIPLHTSGRLTPRALHSFITPPTTPQLRRHAKLKPPRTPPPPSRKVFQLLPSFPTLTRSKSHESQLGNRIDDVTPMKFELPHGSPQLVRRDIGLSVTHRFSTKSWLSQVCNVCQKSMIFGVKCKHCRLKCHNKCTKEAPACRITFLPLARLRRTESVPSDINNPVDRAAEPHFGTLPKALTKKEHPPAMNLDSSSNPSSTTSSTPSSPAPFLTSSNPSSATTPPNPSPGQRDSRFSFPDISACSQAAPLSSTADSTRLDDQPKTDVLGVHEAEAEEPEAGKSEAEDDEEDEVDDLPSSRRPWRGPISRKASQTSVYLQEWDIPFEQVELGEPIGQGRWGRVHRGRWHGEVAIRLLEMDGHNQDHLKLFKKEVMNYRQTRHENVVLFMGACMNPPHLAIITSFCKGRTLHSFVRDPKTSLDINKTRQIAQEIIKGMGYLHAKGIVHKDLKSKNVFYDNGKVVITDFGLFGISGVVREERRENQLKLSHDWLCYLAPEIVREMIPGRDEDQLPFSKAADVYAFGTVWYELQARDWPFKHQPAEALIWQIGSGEGVRRVLASVSLGKEVGEILSACWAFDLQERPSFSLLMDMLERLPKLNRRLSHPGHFWKSADINSSKVMPRFERFGLGTLESGNPKM.

Disordered regions lie at residues 1–24, 174–230, and 251–281; these read MDRAALRAAAMGEKKEGGGGGAAA, EHKM…PGLS, and LHSFITPPTTPQLRRHAKLKPPRTPPPPSRK. Residues 1–170 form a mediates association with membranes region; that stretch reads MDRAALRAAA…ALTCLRKVTG (170 aa). Residues 206–216 show a composition bias toward polar residues; the sequence is ASTQGPRSISV. Phosphothreonine is present on residues threonine 256 and threonine 260. A Phosphoserine; by MARK3 modification is found at serine 297. Serine 320 is modified (phosphoserine). The Phorbol-ester/DAG-type zinc-finger motif lies at 333 to 377; sequence THRFSTKSWLSQVCNVCQKSMIFGVKCKHCRLKCHNKCTKEAPAC. Position 334 (histidine 334) interacts with Zn(2+). Position 337 is a phosphoserine (serine 337). 7 residues coordinate Zn(2+): cysteine 346, cysteine 349, cysteine 359, cysteine 362, histidine 367, cysteine 370, and cysteine 377. Position 392 is a phosphoserine; by MARK3 (serine 392). Threonine 411 bears the Phosphothreonine mark. 2 disordered regions span residues 416–473 and 506–544; these read LTKK…RFSF and HEAEAEEPEAGKSEAEDDEEDEVDDLPSSRRPWRGPISR. Residues 429–458 are compositionally biased toward low complexity; sequence SSSNPSSTTSSTPSSPAPFLTSSNPSSATT. Over residues 506–519 the composition is skewed to basic and acidic residues; it reads HEAEAEEPEAGKSE. Serine 518 carries the post-translational modification Phosphoserine. The span at 520–530 shows a compositional bias: acidic residues; sequence AEDDEEDEVDD. The Protein kinase domain maps to 563–833; sequence VELGEPIGQG…MDMLERLPKL (271 aa). 569–577 contacts ATP; that stretch reads IGQGRWGRV. Aspartate 683 (proton acceptor) is an active-site residue. Residues lysine 685 and aspartate 700 each contribute to the ATP site. At serine 838 the chain carries Phosphoserine.

The protein belongs to the protein kinase superfamily. TKL Ser/Thr protein kinase family. As to quaternary structure, homodimer. Heterodimerizes (via N-terminus) with BRAF (via N-terminus) in a MAP2K1/MEK1 or MAP2K2/MEK2-dependent manner. Interacts with MAP2K1/MEK1 and MAP2K2/MEK2. Binding to MAP2K1/MEK1 releases the intramolecular inhibitory interaction between KSR1 N-terminus and kinase domains which is required for the subsequent RSK1 dimerization with BRAF. Identified in a complex with AKAP13, MAP2K1 and BRAF. Interacts with AKAP13 and BRAF. Interacts with RAF and MAPK/ERK, in a Ras-dependent manner. Interacts with 14-3-3 proteins including YWHAB. Interacts with HSP90AA1/HSP90, YWHAE/14-3-3 and CDC37. The binding of 14-3-3 proteins to phosphorylated KSR1 prevents the membrane localization. Interacts with MARK3/C-TAK1. Interacts with PPP2R1A and PPP2CA. Interacts with VRK2. Post-translationally, phosphorylated on Ser-297 and, to a higher extent, on Ser-392 by MARK3. Dephosphorylated on Ser-392 by PPP2CA. Phosphorylated KSR1 is cytoplasmic and dephosphorylated KSR1 is membrane-associated. Phosphorylated by PKA at Ser-838. Phosphorylation at Ser-838 is required for cAMP-dependent activation of MAPK1 and/or MAPK3. In terms of tissue distribution, expressed in brain, spleen and testis. Isoform 1 is highly expressed spleen and weakly in testis, and isoform 2 is highly expressed in brain and weakly in testis.

It is found in the cytoplasm. The protein resides in the membrane. It localises to the cell membrane. Its subcellular location is the cell projection. The protein localises to the ruffle membrane. It is found in the endoplasmic reticulum membrane. It carries out the reaction L-seryl-[protein] + ATP = O-phospho-L-seryl-[protein] + ADP + H(+). It catalyses the reaction L-threonyl-[protein] + ATP = O-phospho-L-threonyl-[protein] + ADP + H(+). Functionally, part of a multiprotein signaling complex which promotes phosphorylation of Raf family members and activation of downstream MAP kinases. Independently of its kinase activity, acts as MAP2K1/MEK1 and MAP2K2/MEK2-dependent allosteric activator of BRAF; upon binding to MAP2K1/MEK1 or MAP2K2/MEK2, dimerizes with BRAF and promotes BRAF-mediated phosphorylation of MAP2K1/MEK1 and/or MAP2K2/MEK2. Promotes activation of MAPK1 and/or MAPK3, both in response to EGF and to cAMP. Its kinase activity is unsure. Some protein kinase activity has been detected in vitro, however the physiological relevance of this activity is unknown. This chain is Kinase suppressor of Ras 1 (Ksr1), found in Mus musculus (Mouse).